Here is a 205-residue protein sequence, read N- to C-terminus: Probable thymidylate kinase (205 aa).

7–14 (GIDGSGKS) serves as a coordination point for ATP.

The protein belongs to the thymidylate kinase family.

The catalysed reaction is dTMP + ATP = dTDP + ADP. This is Probable thymidylate kinase from Methanoculleus marisnigri (strain ATCC 35101 / DSM 1498 / JR1).